A 371-amino-acid polypeptide reads, in one-letter code: Opsin Rh1 (371 aa).

Over 1-47 (MERYSTPLIGPSFAALTNGSVTDKVTPDMAHLVHPYWNQFPAMEPKW) the chain is Extracellular. The N-linked (GlcNAc...) asparagine glycan is linked to Asn18. Residues 48–72 (AKFLAAYMVLIATISWCGNGVVIYI) form a helical membrane-spanning segment. Residues 73 to 84 (FSTTKSLRTPAN) lie on the Cytoplasmic side of the membrane. The helical transmembrane segment at 85–110 (LLVINLAISDFGIMITNTPMMGINLF) threads the bilayer. At 111 to 124 (YETWVLGPLMCDIY) the chain is on the extracellular side. An intrachain disulfide couples Cys121 to Cys198. The helical transmembrane segment at 125 to 144 (GGLGSAFGCSSILSMCMISL) threads the bilayer. At 145 to 163 (DRYNVIVKGMAGQPMTIKL) the chain is on the cytoplasmic side. The chain crosses the membrane as a helical span at residues 164 to 187 (AIMKIALIWFMASIWTLAPVFGWS). The Extracellular segment spans residues 188–211 (RYVPEGNLTSCGIDYLERDWNPRS). The helical transmembrane segment at 212–239 (YLIFYSIFVYYLPLFLICYSYWFIIAAV) threads the bilayer. Over 240-274 (SAHEKAMREQAKKMNVKSLRSSEDADKSAEGKLAK) the chain is Cytoplasmic. Residues 275–298 (VALVTISLWFMAWTPYTIINTLGL) traverse the membrane as a helical segment. Topologically, residues 299–305 (FKYEGLT) are extracellular. The chain crosses the membrane as a helical span at residues 306-330 (PLNTIWGACFAKSAACYNPIVYGIS). Position 317 is an N6-(retinylidene)lysine (Lys317). Residues 331–371 (HPKYGIALKEKCPCCVFGKVDDGKASDATSQATNNESETKA) lie on the Cytoplasmic side of the membrane.

Belongs to the G-protein coupled receptor 1 family. Opsin subfamily. In terms of processing, phosphorylated on some or all of the serine and threonine residues present in the C-terminal region.

The protein resides in the cell projection. It localises to the rhabdomere membrane. Visual pigments are the light-absorbing molecules that mediate vision. They consist of an apoprotein, opsin, covalently linked to cis-retinal. In Calliphora vicina (Blue blowfly), this protein is Opsin Rh1 (NINAE).